The primary structure comprises 112 residues: Urease subunit beta (112 aa).

Belongs to the urease beta subunit family. In terms of assembly, heterotrimer of UreA (gamma), UreB (beta) and UreC (alpha) subunits. Three heterotrimers associate to form the active enzyme.

Its subcellular location is the cytoplasm. The enzyme catalyses urea + 2 H2O + H(+) = hydrogencarbonate + 2 NH4(+). The protein operates within nitrogen metabolism; urea degradation; CO(2) and NH(3) from urea (urease route): step 1/1. The chain is Urease subunit beta from Polaromonas sp. (strain JS666 / ATCC BAA-500).